A 140-amino-acid polypeptide reads, in one-letter code: Fatty acid-binding protein 12 (140 aa).

Residues Arg-107 and 127-129 each bind a fatty acid; that span reads RTY.

It belongs to the calycin superfamily. Fatty-acid binding protein (FABP) family. As to expression, expressed in a number of retinoblastoma cell lines.

May play a role in lipid transport. This chain is Fatty acid-binding protein 12 (FABP12), found in Homo sapiens (Human).